Here is a 274-residue protein sequence, read N- to C-terminus: PTS system sorbose-specific EIID component (274 aa).

One can recognise a PTS EIID domain in the interval 4–273; that stretch reads KKITQGDLVS…GIIGNALGFL (270 aa). 6 helical membrane-spanning segments follow: residues 61–81, 99–119, 126–146, 186–206, 226–246, and 253–273; these read LVFF…TAAM, IKVG…WGTL, LGAS…FFIF, ILGL…NVPL, ILDQ…MVRL, and PVWL…LGFL.

It localises to the cell inner membrane. In terms of biological role, the phosphoenolpyruvate-dependent sugar phosphotransferase system (PTS), a major carbohydrate active transport system, catalyzes the phosphorylation of incoming sugar substrates concomitant with their translocation across the cell membrane. The enzyme II SorABFM PTS system is involved in sorbose transport. This chain is PTS system sorbose-specific EIID component, found in Klebsiella pneumoniae.